Consider the following 539-residue polypeptide: CTP synthase (539 aa).

The interval 1 to 267 is amidoligase domain; that stretch reads MTKYIFVTGG…DQKVVDFLHI (267 aa). Residue Ser-13 coordinates CTP. Ser-13 lines the UTP pocket. 14-19 serves as a coordination point for ATP; that stretch reads SLGKGI. Residue Tyr-54 coordinates L-glutamine. Position 71 (Asp-71) interacts with ATP. Residues Asp-71 and Glu-141 each coordinate Mg(2+). Residues 148–150, 188–193, and Lys-224 contribute to the CTP site; these read DME and KSKPTQ. UTP is bound by residues 188–193 and Lys-224; that span reads KSKPTQ. One can recognise a Glutamine amidotransferase type-1 domain in the interval 294-537; that stretch reads KITLVGKYVE…IGAASGLQVD (244 aa). Gly-356 is an L-glutamine binding site. Cys-383 functions as the Nucleophile; for glutamine hydrolysis in the catalytic mechanism. L-glutamine-binding positions include 384 to 387, Glu-407, and Arg-465; that span reads LGMQ. Active-site residues include His-510 and Glu-512.

Belongs to the CTP synthase family. In terms of assembly, homotetramer.

The enzyme catalyses UTP + L-glutamine + ATP + H2O = CTP + L-glutamate + ADP + phosphate + 2 H(+). It carries out the reaction L-glutamine + H2O = L-glutamate + NH4(+). The catalysed reaction is UTP + NH4(+) + ATP = CTP + ADP + phosphate + 2 H(+). The protein operates within pyrimidine metabolism; CTP biosynthesis via de novo pathway; CTP from UDP: step 2/2. Its activity is regulated as follows. Allosterically activated by GTP, when glutamine is the substrate; GTP has no effect on the reaction when ammonia is the substrate. The allosteric effector GTP functions by stabilizing the protein conformation that binds the tetrahedral intermediate(s) formed during glutamine hydrolysis. Inhibited by the product CTP, via allosteric rather than competitive inhibition. In terms of biological role, catalyzes the ATP-dependent amination of UTP to CTP with either L-glutamine or ammonia as the source of nitrogen. Regulates intracellular CTP levels through interactions with the four ribonucleotide triphosphates. In Lactobacillus delbrueckii subsp. bulgaricus (strain ATCC BAA-365 / Lb-18), this protein is CTP synthase.